Here is a 750-residue protein sequence, read N- to C-terminus: 5-methyltetrahydropteroyltriglutamate--homocysteine methyltransferase (750 aa).

5-methyltetrahydropteroyltri-L-glutamate contacts are provided by residues 15–18 (RELK) and Lys114. L-homocysteine-binding positions include 425–427 (IGS) and Glu478. L-methionine is bound by residues 425 to 427 (IGS) and Glu478. Trp555 contacts 5-methyltetrahydropteroyltri-L-glutamate. Residue Asp593 participates in L-homocysteine binding. Asp593 contributes to the L-methionine binding site. Position 599 (Glu599) interacts with 5-methyltetrahydropteroyltri-L-glutamate. Residues His636, Cys638, and Glu660 each contribute to the Zn(2+) site. Catalysis depends on His689, which acts as the Proton donor. Cys721 serves as a coordination point for Zn(2+).

This sequence belongs to the vitamin-B12 independent methionine synthase family. The cofactor is Zn(2+).

The catalysed reaction is 5-methyltetrahydropteroyltri-L-glutamate + L-homocysteine = tetrahydropteroyltri-L-glutamate + L-methionine. It participates in amino-acid biosynthesis; L-methionine biosynthesis via de novo pathway; L-methionine from L-homocysteine (MetE route): step 1/1. Its function is as follows. Catalyzes the transfer of a methyl group from 5-methyltetrahydrofolate to homocysteine resulting in methionine formation. The polypeptide is 5-methyltetrahydropteroyltriglutamate--homocysteine methyltransferase (Streptococcus sanguinis (strain SK36)).